The sequence spans 483 residues: Argininosuccinate lyase (483 aa).

It belongs to the lyase 1 family. Argininosuccinate lyase subfamily.

It is found in the cytoplasm. It catalyses the reaction 2-(N(omega)-L-arginino)succinate = fumarate + L-arginine. It functions in the pathway amino-acid biosynthesis; L-arginine biosynthesis; L-arginine from L-ornithine and carbamoyl phosphate: step 3/3. The chain is Argininosuccinate lyase from Archaeoglobus fulgidus (strain ATCC 49558 / DSM 4304 / JCM 9628 / NBRC 100126 / VC-16).